A 539-amino-acid polypeptide reads, in one-letter code: MALFQAMSMVAQLGYYEKVAGVLGFLSIALLFWKLNHKPFYPALPLAGEPPQRRWFSLSNRLRYYNDCAALFDEAYHTAYAKKGKAVLVPSMGVHTAMIMPESAMNWAMSQPDDSLSIKKAFSELNQTKYSLGHGRYWEDPWQLDLVKAHLSSILQNLIPQLNEELAAAFSKHLGTDAENWKEIELEVIMRRIIAQATSRFIVGLPLCRDDGYLDLSYKVILGMVTTIWATLPFPDLIRAITGPIASWQTRRNIARIQEYLEPLYQERISILESRDGPESDPEPQDLFMMMLRFAQKKRPDEYANLGIMTRRVCAANFVAMHQSTVSVTNLILNIIGSDAEFNTTATLRDEITQVMRGTDAKSWTKDTFTRMRKCDSVAREAMRLNFPLGTRGSMRAVLKDGLESPEGIKLQKGTTISWLASCAQVDADRFDNPQKFDPFRFSRASKDDDDDGKSTSSHAKDAFVTTSPQYLPFGHGKHACPGRFMVDLMFKILLAQLLTHYDLGWPEDYQGKQPPSVWQGELSEPPPGARILVKRRKV.

The helical transmembrane segment at 13-33 (LGYYEKVAGVLGFLSIALLFW) threads the bilayer. Positions 439 to 460 (PFRFSRASKDDDDDGKSTSSHA) are disordered. Cys481 lines the heme pocket.

It belongs to the cytochrome P450 family. It depends on heme as a cofactor.

Its subcellular location is the membrane. Its pathway is secondary metabolite biosynthesis. In terms of biological role, cytochrome P450 monooxygenase; part of the gene cluster that mediates the biosynthesis of tenellin-type 2-pyridones, iron-chelating compounds involved in iron stress tolerance, competition with the natural competitor fungus Metarhizium robertsii and insect hosts infection. TenB catalyzes the selective N-hydroxylation of the 2-pyridone nitrogen of yield tellinin and 15-hydroxytellenin (15-HT), respectively. The pathway begins with the assembly of the polyketide-amino acid backbone by the hybrid PKS-NRPS tenS with the help of the enoyl reductase tenC. These enzymes catalyze the synthesis of the pyrrolidine-2-dione intermediates pretellinin A, 11-hydropretellenin A, 12-hydropretellenin A, 13-hydropretellenin A, 14-hydropretellenin A, 12-oxopretellenin A and prototellinin D. The cytochrome P450 monooxygenase tenA then catalyzes an oxidative ring expansion of pretenellin A and 14-hydropretellenin A to form the 2-pyridone core, leading to pretenellin B and pyridovericin, respectively. The cytochrome P450 monooxygenase tenB is then required for the selective N-hydroxylation of the 2-pyridone nitrogen of yield tellinin and 15-hydroxytellenin (15-HT), respectively. The UDP-glucosyltransferase GT1 and the methyltransferase MT1, located outside the tenS gene cluster, contribute to the stepwise glycosylation and methylation of 15-HT to obtain the glycoside pyridovericin-N-O-(4-O-methyl-beta-D-glucopyranoside) (PMGP). Additional related compounds such as 1-O-methyl-15-HT, (8Z)-1-O-methyl-15-HT, and O-methyltenellin A are also produced but the enzymes involved in their biosynthesis have still to be determined. The sequence is that of Cytochrome P450 monooxygenase tenB from Beauveria bassiana (White muscardine disease fungus).